A 309-amino-acid chain; its full sequence is Glutaminase (309 aa).

Substrate-binding residues include Ser-64, Asn-114, Glu-160, Asn-167, Tyr-191, Tyr-243, and Val-261.

This sequence belongs to the glutaminase family. In terms of assembly, homotetramer.

The enzyme catalyses L-glutamine + H2O = L-glutamate + NH4(+). This Methylobacterium nodulans (strain LMG 21967 / CNCM I-2342 / ORS 2060) protein is Glutaminase.